The primary structure comprises 208 residues: N-(5'-phosphoribosyl)anthranilate isomerase (208 aa).

This sequence belongs to the TrpF family.

It carries out the reaction N-(5-phospho-beta-D-ribosyl)anthranilate = 1-(2-carboxyphenylamino)-1-deoxy-D-ribulose 5-phosphate. It participates in amino-acid biosynthesis; L-tryptophan biosynthesis; L-tryptophan from chorismate: step 3/5. The polypeptide is N-(5'-phosphoribosyl)anthranilate isomerase (Methanococcus maripaludis (strain C5 / ATCC BAA-1333)).